The primary structure comprises 993 residues: Replication protein 1a (993 aa).

Positions 51–409 (NVLGVKDSEV…TIVINGMSMQ (359 aa)) are methyltransferase. The 219-residue stretch at 72-290 (HLTQQEFAPH…HDWENIKSFL (219 aa)) folds into the Alphavirus-like MT domain. A disordered region spans residues 538–561 (AQPVSEVSDSPETSSQTPDDTADV). A compositionally biased stretch (polar residues) spans 542–556 (SEVSDSPETSSQTPD). Residues 687 to 838 (CVICNSESLS…KIIPDETSDA (152 aa)) form the (+)RNA virus helicase ATP-binding domain. The interval 712-975 (VDGVAGCGKT…LTRHKVTFRY (264 aa)) is ATP-dependent helicase. ATP is bound at residue 714-721 (GVAGCGKT). The (+)RNA virus helicase C-terminal domain maps to 839-993 (DTTFRSPQDV…DLIAECVARA (155 aa)).

It belongs to the bromoviridae replication protein 1a family. As to quaternary structure, interacts with RNA-directed RNA polymerase 2a.

It localises to the host endoplasmic reticulum membrane. Its function is as follows. Involved in the virus replication. Contains a helicase domain and a methyltransferase domain. The methyltransferase domain is probably involved in viral RNA capping. Involved in the formation of ER membrane spherular invaginations in which RNA replication complexes form. The protein is Replication protein 1a of Cucumber mosaic virus (strain FNY) (CMV).